Here is a 57-residue protein sequence, read N- to C-terminus: uncharacterized protein (57 aa).

This is an uncharacterized protein from Haemophilus influenzae (strain ATCC 51907 / DSM 11121 / KW20 / Rd).